The chain runs to 387 residues: Cysteine desulfurase IscS (387 aa).

Pyridoxal 5'-phosphate is bound by residues 73–74 (AT), Asn-155, Gln-183, and 203–205 (SAH). Position 206 is an N6-(pyridoxal phosphate)lysine (Lys-206). Thr-241 is a pyridoxal 5'-phosphate binding site. The active-site Cysteine persulfide intermediate is Cys-328. Cys-328 is a binding site for [2Fe-2S] cluster.

Belongs to the class-V pyridoxal-phosphate-dependent aminotransferase family. NifS/IscS subfamily. As to quaternary structure, homodimer. Forms a heterotetramer with IscU, interacts with other sulfur acceptors. Pyridoxal 5'-phosphate is required as a cofactor.

The protein resides in the cytoplasm. It catalyses the reaction (sulfur carrier)-H + L-cysteine = (sulfur carrier)-SH + L-alanine. Its pathway is cofactor biosynthesis; iron-sulfur cluster biosynthesis. In terms of biological role, master enzyme that delivers sulfur to a number of partners involved in Fe-S cluster assembly, tRNA modification or cofactor biosynthesis. Catalyzes the removal of elemental sulfur atoms from cysteine to produce alanine. Functions as a sulfur delivery protein for Fe-S cluster synthesis onto IscU, an Fe-S scaffold assembly protein, as well as other S acceptor proteins. The sequence is that of Cysteine desulfurase IscS from Helicobacter pylori (strain P12).